The following is a 2554-amino-acid chain: Protein sevenless (2554 aa).

Positions 1–10 (MTMFWQQNVD) are enriched in polar residues. The tract at residues 1-25 (MTMFWQQNVDHQSDEQDKQAKGAAP) is disordered. Topologically, residues 1–2123 (MTMFWQQNVD…AEPFVSPEKR (2123 aa)) are extracellular. Positions 11–20 (HQSDEQDKQA) are enriched in basic and acidic residues. A glycan (N-linked (GlcNAc...) asparagine) is linked at Asn-30. The segment covering 51-70 (NQQAPGTSSSSSNSQNASPS) has biased composition (low complexity). A disordered region spans residues 51–75 (NQQAPGTSSSSSNSQNASPSKIVVR). N-linked (GlcNAc...) asparagine glycosylation is present at Asn-129. The segment at 181 to 208 (SRPQSTMAHHPDDRDRDRDPSEEQHGVD) is disordered. A compositionally biased stretch (basic and acidic residues) spans 189–208 (HHPDDRDRDRDPSEEQHGVD). A Fibronectin type-III 1 domain is found at 440–533 (APVIEHLMGL…GFVQTHSARN (94 aa)). N-linked (GlcNAc...) asparagine glycans are attached at residues Asn-481, Asn-505, Asn-617, and Asn-647. Residues 824 to 924 (AGGKPHSLKA…EPLAARTWPL (101 aa)) form the Fibronectin type-III 2 domain. N-linked (GlcNAc...) asparagine glycosylation occurs at Asn-966. Residues 1010–1053 (GRVYWTDLARNCVVRMDPWSGSRELLPVFEANFLALDPRQGHLY) form an LDL-receptor class B repeat. Fibronectin type-III domains lie at 1202–1290 (LPDS…TPPV) and 1294–1397 (QPRR…VAPE). N-linked (GlcNAc...) asparagine glycans are attached at residues Asn-1228, Asn-1313, Asn-1353, Asn-1550, Asn-1557, Asn-1639, Asn-1725, Asn-1756, Asn-1804, Asn-1889, Asn-1947, and Asn-2073. Fibronectin type-III domains are found at residues 1801 to 1901 (PPRN…SFAE), 1902 to 1988 (LPEL…VYET), and 1995 to 2117 (QPGK…AEPF). The chain crosses the membrane as a helical span at residues 2124 to 2147 (GSLVLAIIAPAAIVSSCVLALVLV). The Cytoplasmic segment spans residues 2148–2554 (RKVQKRRLRA…LYANEGVSRL (407 aa)). Residues 2209-2485 (LKLLRFLGSG…RCYNTLHAIS (277 aa)) form the Protein kinase domain. ATP-binding positions include 2215 to 2223 (LGSGAFGEV) and Lys-2242. Catalysis depends on Asp-2343, which acts as the Proton acceptor. Tyr-2380 is subject to Phosphotyrosine; by autocatalysis. Over residues 2515–2527 (GQPLEEHREHNER) the composition is skewed to basic and acidic residues. Residues 2515–2534 (GQPLEEHREHNERPEDENLT) are disordered.

The protein belongs to the protein kinase superfamily. Tyr protein kinase family. Insulin receptor subfamily. As to quaternary structure, may form a complex with drk and Sos. Binds the phosphotyrosine interaction domain (PID) of Dab.

Its subcellular location is the cell membrane. It catalyses the reaction L-tyrosyl-[protein] + ATP = O-phospho-L-tyrosyl-[protein] + ADP + H(+). Its function is as follows. Receptor for an extracellular signal required to instruct a cell to differentiate into an R7 photoreceptor. The ligand for sev is the boss (bride of sevenless) protein on the surface of the neighboring R8 cell. This Drosophila melanogaster (Fruit fly) protein is Protein sevenless (sev).